The following is a 370-amino-acid chain: Small ribosomal subunit biogenesis GTPase RsgA 1 (370 aa).

One can recognise a CP-type G domain in the interval 97–255 (QTQLDRPPIA…LADTPGFNQP (159 aa)). Residues 146–149 (NKSD) and 197–205 (GPSGVGKSS) contribute to the GTP site. Residues C280, C285, H287, and C293 each contribute to the Zn(2+) site. The interval 325-370 (PESTLKLKTKGKGQSQYEPKLESKKYRRTSRRTQVQGLQDLYQEEE) is disordered.

Belongs to the TRAFAC class YlqF/YawG GTPase family. RsgA subfamily. Monomer. Associates with 30S ribosomal subunit, binds 16S rRNA. Zn(2+) serves as cofactor.

The protein localises to the cytoplasm. One of several proteins that assist in the late maturation steps of the functional core of the 30S ribosomal subunit. Helps release RbfA from mature subunits. May play a role in the assembly of ribosomal proteins into the subunit. Circularly permuted GTPase that catalyzes slow GTP hydrolysis, GTPase activity is stimulated by the 30S ribosomal subunit. The sequence is that of Small ribosomal subunit biogenesis GTPase RsgA 1 from Nostoc sp. (strain PCC 7120 / SAG 25.82 / UTEX 2576).